The primary structure comprises 433 residues: Glutamate-1-semialdehyde 2,1-aminomutase (433 aa).

K266 carries the N6-(pyridoxal phosphate)lysine modification.

This sequence belongs to the class-III pyridoxal-phosphate-dependent aminotransferase family. HemL subfamily. As to quaternary structure, homodimer. It depends on pyridoxal 5'-phosphate as a cofactor.

It is found in the cytoplasm. The catalysed reaction is (S)-4-amino-5-oxopentanoate = 5-aminolevulinate. Its pathway is porphyrin-containing compound metabolism; protoporphyrin-IX biosynthesis; 5-aminolevulinate from L-glutamyl-tRNA(Glu): step 2/2. In Psychrobacter arcticus (strain DSM 17307 / VKM B-2377 / 273-4), this protein is Glutamate-1-semialdehyde 2,1-aminomutase.